Reading from the N-terminus, the 680-residue chain is DNA ligase (680 aa).

NAD(+) contacts are provided by residues 32-36, 81-82, and Glu-115; these read DAVYD and SL. Lys-117 (N6-AMP-lysine intermediate) is an active-site residue. Residues Arg-138, Glu-175, Lys-291, and Lys-315 each coordinate NAD(+). Cys-409, Cys-412, Cys-427, and Cys-432 together coordinate Zn(2+). Positions 600 to 680 constitute a BRCT domain; sequence ASEQHLKGLT…RLQAMLKDSP (81 aa).

It belongs to the NAD-dependent DNA ligase family. LigA subfamily. It depends on Mg(2+) as a cofactor. Requires Mn(2+) as cofactor.

The catalysed reaction is NAD(+) + (deoxyribonucleotide)n-3'-hydroxyl + 5'-phospho-(deoxyribonucleotide)m = (deoxyribonucleotide)n+m + AMP + beta-nicotinamide D-nucleotide.. DNA ligase that catalyzes the formation of phosphodiester linkages between 5'-phosphoryl and 3'-hydroxyl groups in double-stranded DNA using NAD as a coenzyme and as the energy source for the reaction. It is essential for DNA replication and repair of damaged DNA. The sequence is that of DNA ligase from Synechococcus sp. (strain CC9902).